Reading from the N-terminus, the 501-residue chain is NAD(P)H-quinone oxidoreductase subunit 2, chloroplastic (501 aa).

The next 14 membrane-spanning stretches (helical) occupy residues 15-35, 42-62, 82-102, 107-127, 132-152, 167-187, 210-230, 244-264, 278-298, 307-327, 334-354, 378-398, 410-430, and 466-486; these read ILPECVLIFCLISILILDLIL, VFFFISLVSLLLSIFILIFQL, IFRIFIALCSILCIPLSIDFI, LAITEFLIFLLTATIGGMFLC, LITIFVSLECLSLCSYLLSGY, LLIGGTSSSILAYGFSWLYGL, FGSLLALVFIIVGIGFKLSLV, PTPVVAFLSVASKIAGLALLV, WHSLLEISAICSMILGNLVAI, LAYSSISQIGYLMIGLVTGNF, IVYLLFYIFMNLGTFACIILF, FSLALCLLSLGGIPPLSGFFG, GLYFLVFIGLFTSVISIYYYL, and VSIIICVIASIFLGIFMNPII.

This sequence belongs to the complex I subunit 2 family. In terms of assembly, NDH is composed of at least 16 different subunits, 5 of which are encoded in the nucleus.

The protein resides in the plastid. The protein localises to the chloroplast thylakoid membrane. It carries out the reaction a plastoquinone + NADH + (n+1) H(+)(in) = a plastoquinol + NAD(+) + n H(+)(out). The enzyme catalyses a plastoquinone + NADPH + (n+1) H(+)(in) = a plastoquinol + NADP(+) + n H(+)(out). Functionally, NDH shuttles electrons from NAD(P)H:plastoquinone, via FMN and iron-sulfur (Fe-S) centers, to quinones in the photosynthetic chain and possibly in a chloroplast respiratory chain. The immediate electron acceptor for the enzyme in this species is believed to be plastoquinone. Couples the redox reaction to proton translocation, and thus conserves the redox energy in a proton gradient. The polypeptide is NAD(P)H-quinone oxidoreductase subunit 2, chloroplastic (Physcomitrium patens (Spreading-leaved earth moss)).